A 111-amino-acid chain; its full sequence is Disintegrin DS-AS (111 aa).

The signal sequence occupies residues Met1–Cys20. The propeptide occupies Ile21–Met47. Residues Met47–Asp111 form the Disintegrin domain. Cystine bridges form between Cys53/Cys76, Cys67/Cys73, Cys72/Cys97, and Cys85/Cys104. The Cell attachment site motif lies at Arg89–Asp91.

As to quaternary structure, heterodimer; disulfide-linked.

The protein localises to the secreted. Inhibits ADP-induced platelet aggregation in human platelet-rich plasma (IC(50) is 8 uM). The sequence is that of Disintegrin DS-AS from Atheris squamigera (Variable bush viper).